A 175-amino-acid polypeptide reads, in one-letter code: Alpha-crystallin B chain (175 aa).

The residue at position 1 (Met-1) is an N-acetylmethionine. At Ser-19 the chain carries Phosphoserine. A glycan (O-linked (GlcNAc) serine) is linked at Ser-41. Phosphoserine is present on residues Ser-45 and Ser-59. Residues 56–164 form the sHSP domain; the sequence is RAPSWFDTGL…PERTIPITRE (109 aa). A Zn(2+)-binding site is contributed by His-83. At Lys-92 the chain carries N6-acetyllysine; partial. Residues His-104, Glu-106, His-111, and His-119 each contribute to the Zn(2+) site. The tract at residues 146–175 is disordered; sequence NGPRKQVSGPERTIPITREEKPAVTAAPKK. An N6-acetyllysine modification is found at Lys-166. Thr-170 carries an O-linked (GlcNAc) threonine glycan.

Belongs to the small heat shock protein (HSP20) family. As to quaternary structure, heteromer composed of three CRYAA and one CRYAB subunits. Aggregates with homologous proteins, including the small heat shock protein HSPB1, to form large heteromeric complexes. Inter-subunit bridging via zinc ions enhances stability, which is crucial as there is no protein turn over in the lens. Interacts with HSPBAP1 and TTN/titin. Interacts with TMEM109; in the cellular response to DNA damage. Interacts with DES; binds rapidly during early stages of DES filament assembly and a reduced binding seen in the later stages. Interacts with TMED10; the interaction mediates the translocation from the cytoplasm into the ERGIC (endoplasmic reticulum-Golgi intermediate compartment) and thereby secretion. Interacts with ATP6V1A and with MTOR, forming a ternary complex. As to expression, lens as well as other tissues. Expressed in myocardial tissue.

It is found in the cytoplasm. Its subcellular location is the nucleus. The protein localises to the secreted. It localises to the lysosome. Its function is as follows. May contribute to the transparency and refractive index of the lens. Has chaperone-like activity, preventing aggregation of various proteins under a wide range of stress conditions. In lens epithelial cells, stabilizes the ATP6V1A protein, preventing its degradation by the proteasome. The sequence is that of Alpha-crystallin B chain from Homo sapiens (Human).